Consider the following 197-residue polypeptide: UDP-N-acetylglucosamine transferase subunit alg13 (197 aa).

Residues 174–197 are disordered; the sequence is VRGPDQKNQPTLEQVMSDEMGFVD.

This sequence belongs to the glycosyltransferase 28 family. Heterodimer with alg14 to form a functional enzyme.

It localises to the endoplasmic reticulum. The enzyme catalyses an N-acetyl-alpha-D-glucosaminyl-diphospho-di-trans,poly-cis-dolichol + UDP-N-acetyl-alpha-D-glucosamine = an N,N'-diacetylchitobiosyl-diphospho-di-trans,poly-cis-dolichol + UDP + H(+). Its function is as follows. Involved in protein N-glycosylation. Essential for the second step of the dolichol-linked oligosaccharide pathway. In Aspergillus fumigatus (strain ATCC MYA-4609 / CBS 101355 / FGSC A1100 / Af293) (Neosartorya fumigata), this protein is UDP-N-acetylglucosamine transferase subunit alg13 (alg13).